Here is a 302-residue protein sequence, read N- to C-terminus: Pentatricopeptide repeat-containing protein At4g38150 (302 aa).

Over residues S26–D40 the composition is skewed to polar residues. 2 disordered regions span residues S26–S82 and V94–E116. The segment covering L54–P67 has biased composition (basic and acidic residues). PPR repeat units follow at residues L130 to P164, E165 to P199, N200 to P234, and N235 to V269.

It belongs to the PPR family. P subfamily.

The sequence is that of Pentatricopeptide repeat-containing protein At4g38150 from Arabidopsis thaliana (Mouse-ear cress).